We begin with the raw amino-acid sequence, 273 residues long: Ethanolamine ammonia-lyase small subunit (273 aa).

Adenosylcob(III)alamin is bound by residues Val-164, Glu-185, and Cys-214.

This sequence belongs to the EutC family. The basic unit is a heterodimer which dimerizes to form tetramers. The heterotetramers trimerize; 6 large subunits form a core ring with 6 small subunits projecting outwards. The cofactor is adenosylcob(III)alamin.

Its subcellular location is the bacterial microcompartment. The enzyme catalyses ethanolamine = acetaldehyde + NH4(+). It participates in amine and polyamine degradation; ethanolamine degradation. Its function is as follows. Catalyzes the deamination of various vicinal amino-alcohols to oxo compounds. Allows this organism to utilize ethanolamine as the sole source of nitrogen and carbon in the presence of external vitamin B12. The polypeptide is Ethanolamine ammonia-lyase small subunit (Pseudomonas aeruginosa (strain LESB58)).